We begin with the raw amino-acid sequence, 488 residues long: N-acyl-D-glutamate deacylase (488 aa).

It belongs to the metallo-dependent hydrolases superfamily. N-acyl-D-amino-acid deacylase family. Zn(2+) serves as cofactor.

The protein localises to the cytoplasm. It carries out the reaction an N-acyl-D-glutamate + H2O = D-glutamate + a carboxylate. Its activity is regulated as follows. Inhibited by cobalt, copper and EDTA. The polypeptide is N-acyl-D-glutamate deacylase (Alcaligenes xylosoxydans xylosoxydans (Achromobacter xylosoxidans)).